The sequence spans 341 residues: Lipoyl synthase (341 aa).

Positions 85, 90, 96, 111, 115, 118, and 325 each coordinate [4Fe-4S] cluster. The Radical SAM core domain maps to Phe97–Lys314.

Belongs to the radical SAM superfamily. Lipoyl synthase family. It depends on [4Fe-4S] cluster as a cofactor.

It is found in the cytoplasm. It carries out the reaction [[Fe-S] cluster scaffold protein carrying a second [4Fe-4S](2+) cluster] + N(6)-octanoyl-L-lysyl-[protein] + 2 oxidized [2Fe-2S]-[ferredoxin] + 2 S-adenosyl-L-methionine + 4 H(+) = [[Fe-S] cluster scaffold protein] + N(6)-[(R)-dihydrolipoyl]-L-lysyl-[protein] + 4 Fe(3+) + 2 hydrogen sulfide + 2 5'-deoxyadenosine + 2 L-methionine + 2 reduced [2Fe-2S]-[ferredoxin]. Its pathway is protein modification; protein lipoylation via endogenous pathway; protein N(6)-(lipoyl)lysine from octanoyl-[acyl-carrier-protein]: step 2/2. In terms of biological role, catalyzes the radical-mediated insertion of two sulfur atoms into the C-6 and C-8 positions of the octanoyl moiety bound to the lipoyl domains of lipoate-dependent enzymes, thereby converting the octanoylated domains into lipoylated derivatives. This chain is Lipoyl synthase, found in Pseudomonas fluorescens (strain SBW25).